A 345-amino-acid chain; its full sequence is NADH-ubiquinone oxidoreductase chain 2 (345 aa).

The next 10 membrane-spanning stretches (helical) occupy residues proline 3 to serine 23, asparagine 25 to alanine 45, tyrosine 59 to tryptophan 79, alanine 95 to proline 115, leucine 148 to glycine 168, isoleucine 177 to methionine 196, isoleucine 201 to serine 223, phenylalanine 236 to leucine 256, asparagine 273 to leucine 293, and phenylalanine 322 to isoleucine 342.

The protein belongs to the complex I subunit 2 family.

The protein resides in the mitochondrion inner membrane. The catalysed reaction is a ubiquinone + NADH + 5 H(+)(in) = a ubiquinol + NAD(+) + 4 H(+)(out). Its function is as follows. Core subunit of the mitochondrial membrane respiratory chain NADH dehydrogenase (Complex I) that is believed to belong to the minimal assembly required for catalysis. Complex I functions in the transfer of electrons from NADH to the respiratory chain. The immediate electron acceptor for the enzyme is believed to be ubiquinone. This chain is NADH-ubiquinone oxidoreductase chain 2 (MT-ND2), found in Polypterus ornatipinnis (Ornate bichir).